The sequence spans 795 residues: Probable diacylglycerol kinase 3 (795 aa).

2 EF-hand domains span residues 170–205 (TPEN…MMNV) and 215–250 (ELEQ…NIPL). Ca(2+)-binding residues include D183, D185, N187, E194, D228, D230, D232, and E239. 2 Phorbol-ester/DAG-type zinc fingers span residues 265 to 316 (SHVW…ATNC) and 329 to 375 (YHHW…AQEC). In terms of domain architecture, DAGKc spans 423-558 (NDCRPLLVLV…MDRWQIKIEI (136 aa)).

This sequence belongs to the eukaryotic diacylglycerol kinase family. Monomer.

It carries out the reaction a 1,2-diacyl-sn-glycerol + ATP = a 1,2-diacyl-sn-glycero-3-phosphate + ADP + H(+). Its function is as follows. Involved in AFD-neuron mediated thermotaxis. Regulates behavior to environmental temperature. Thought to have a role in olfactory adaptation by affecting diacylglycerol levels. The protein is Probable diacylglycerol kinase 3 (dgk-3) of Caenorhabditis elegans.